A 149-amino-acid polypeptide reads, in one-letter code: Endoribonuclease YbeY (149 aa).

Zn(2+) contacts are provided by H112, H116, and H122.

Belongs to the endoribonuclease YbeY family. Zn(2+) serves as cofactor.

The protein localises to the cytoplasm. Its function is as follows. Single strand-specific metallo-endoribonuclease involved in late-stage 70S ribosome quality control and in maturation of the 3' terminus of the 16S rRNA. This is Endoribonuclease YbeY from Methylibium petroleiphilum (strain ATCC BAA-1232 / LMG 22953 / PM1).